Consider the following 341-residue polypeptide: HTH-type transcriptional repressor PurR (341 aa).

Residues 2-56 form the HTH lacI-type domain; it reads ATIKDVAKRANVSTTTVSHVINKTRFVAEETRNAVWAAIKELHYSPSAVARSLKV. The H-T-H motif DNA-binding region spans 4 to 23; that stretch reads IKDVAKRANVSTTTVSHVIN. A DNA-binding region spans residues 48 to 56; it reads SAVARSLKV. Residues Y73, R190, T192, F221, and D275 each contribute to the hypoxanthine site.

Homodimer.

Its pathway is purine metabolism; purine nucleotide biosynthesis [regulation]. Is the main repressor of the genes involved in the de novo synthesis of purine nucleotides, regulating purB, purC, purEK, purF, purHD, purL, purMN and guaBA expression. PurR is allosterically activated to bind its cognate DNA by binding the purine corepressors, hypoxanthine or guanine, thereby effecting transcription repression. This chain is HTH-type transcriptional repressor PurR, found in Shigella dysenteriae serotype 1 (strain Sd197).